Reading from the N-terminus, the 294-residue chain is UDP-3-O-acyl-N-acetylglucosamine deacetylase (294 aa).

Positions 75, 232, and 236 each coordinate Zn(2+). His-259 acts as the Proton donor in catalysis.

This sequence belongs to the LpxC family. It depends on Zn(2+) as a cofactor.

The catalysed reaction is a UDP-3-O-[(3R)-3-hydroxyacyl]-N-acetyl-alpha-D-glucosamine + H2O = a UDP-3-O-[(3R)-3-hydroxyacyl]-alpha-D-glucosamine + acetate. The protein operates within glycolipid biosynthesis; lipid IV(A) biosynthesis; lipid IV(A) from (3R)-3-hydroxytetradecanoyl-[acyl-carrier-protein] and UDP-N-acetyl-alpha-D-glucosamine: step 2/6. Catalyzes the hydrolysis of UDP-3-O-myristoyl-N-acetylglucosamine to form UDP-3-O-myristoylglucosamine and acetate, the committed step in lipid A biosynthesis. This is UDP-3-O-acyl-N-acetylglucosamine deacetylase from Campylobacter jejuni subsp. jejuni serotype O:2 (strain ATCC 700819 / NCTC 11168).